Consider the following 177-residue polypeptide: R-phycoerythrin beta chain (177 aa).

Residues cysteine 50 and cysteine 61 each coordinate phycourobilin. Position 72 is an N4-methylasparagine (asparagine 72). (2R,3E)-phycoerythrobilin-binding residues include cysteine 82 and cysteine 158.

The protein belongs to the phycobiliprotein family. In terms of assembly, heterodimer of an alpha and a beta chain. Contains two covalently linked phycoerythrobilin chromophores and one covalently linked phycourobilin chromophore.

The protein resides in the plastid. Its subcellular location is the chloroplast thylakoid membrane. Light-harvesting photosynthetic bile pigment-protein from the phycobiliprotein complex. This chain is R-phycoerythrin beta chain (cpeB), found in Porphyra purpurea (Red seaweed).